We begin with the raw amino-acid sequence, 522 residues long: Peptide chain release factor 3 (522 aa).

The tr-type G domain maps to 10 to 277; that stretch reads ASRKTFAIIS…TFVDFAPSPS (268 aa). GTP-binding positions include 19-26, 87-91, and 141-144; these read SHPDAGKT, DTPGH, and NKMD.

The protein belongs to the TRAFAC class translation factor GTPase superfamily. Classic translation factor GTPase family. PrfC subfamily.

The protein resides in the cytoplasm. Functionally, increases the formation of ribosomal termination complexes and stimulates activities of RF-1 and RF-2. It binds guanine nucleotides and has strong preference for UGA stop codons. It may interact directly with the ribosome. The stimulation of RF-1 and RF-2 is significantly reduced by GTP and GDP, but not by GMP. This is Peptide chain release factor 3 from Listeria monocytogenes serotype 4b (strain CLIP80459).